The primary structure comprises 134 residues: Postmeiotic segregation increased 2-like protein 5 (134 aa).

It belongs to the DNA mismatch repair MutL/HexB family.

This is Postmeiotic segregation increased 2-like protein 5 (PMS2P5) from Homo sapiens (Human).